A 387-amino-acid chain; its full sequence is Transcription termination/antitermination protein NusA (387 aa).

The region spanning G145–R209 is the S1 motif domain. One can recognise a KH domain in the interval A312 to F379.

The protein belongs to the NusA family. In terms of assembly, monomer. Binds directly to the core enzyme of the DNA-dependent RNA polymerase and to nascent RNA.

The protein localises to the cytoplasm. Its function is as follows. Participates in both transcription termination and antitermination. The protein is Transcription termination/antitermination protein NusA of Thermus thermophilus (strain ATCC 27634 / DSM 579 / HB8).